The following is a 414-amino-acid chain: Histidine--tRNA ligase (414 aa).

This sequence belongs to the class-II aminoacyl-tRNA synthetase family. In terms of assembly, homodimer.

Its subcellular location is the cytoplasm. The enzyme catalyses tRNA(His) + L-histidine + ATP = L-histidyl-tRNA(His) + AMP + diphosphate + H(+). The polypeptide is Histidine--tRNA ligase (Anaeromyxobacter sp. (strain K)).